Consider the following 124-residue polypeptide: uncharacterized protein (124 aa).

The disordered stretch occupies residues 82–124 (SDLGIEGGERAQGQNAHSVHGPGLQTERGGSQLQMVGHPLREL).

This is an uncharacterized protein from Human cytomegalovirus (strain AD169) (HHV-5).